The sequence spans 797 residues: RAS guanyl-releasing protein 1 (797 aa).

The span at 1–12 (MGTLGKAREAPR) shows a compositional bias: basic and acidic residues. Residues 1–23 (MGTLGKAREAPRKPSHGCRAASK) form a disordered region. The N-terminal Ras-GEF domain maps to 53–176 (LGHLAKGASL…RLIDTTQINA (124 aa)). The ras exchanger motif region; required for transforming activity stretch occupies residues 57–110 (AKGASLDDLIDSCIQSFDADGNLCRSNQLLQVMLTMHRIVISSAELLQKVITLY). At Thr-184 the chain carries Phosphothreonine; by PKC. Residues 205-436 (EPEELSEHLT…YELSYAREPR (232 aa)) enclose the Ras-GEF domain. EF-hand domains lie at 470 to 505 (HVQRMVDSVFKNYDHDQDGYISQEEFEKIAASFPFS) and 506 to 532 (FCVMDKDREGLISRDEITAYFMRASSI). Ca(2+) is bound by residues Asp-483, Asp-485, Asp-487, Tyr-489, and Glu-494. A Phorbol-ester/DAG-type zinc finger spans residues 541–591 (PHNFQETTYLKPTFCDNCAGFLWGVIKQGYRCKDCGMNCHKQCKDLVVFEC). The interval 673-694 (TQTESQPWIGSEGPSGPFVLSS) is disordered. A suppress the PT region-mediated translocation to plasma membrane region spans residues 686 to 694 (PSGPFVLSS). A PT region; mediates the BCR-dependent translocation to plasma membrane region spans residues 718 to 797 (LVRKRAFVKW…LAQMEQGDCS (80 aa)). A coiled-coil region spans residues 746–786 (PTYQELEQEINTLKADNDALKIQLKYAQKKIESLQLEKSNH).

This sequence belongs to the RASGRP family. As to quaternary structure, homodimer. Forms a signaling complex with DGKZ and HRAS. Interacts with F-actin. Interacts with SKAP1. Expressed in brain with higher expression in cerebellum, cerebral cortex and amygdala. Expressed in the hematopoietic system. Expressed in T-cells (at protein level). Expressed in NK cells (at protein level).

The protein localises to the cytoplasm. It localises to the cytosol. It is found in the cell membrane. The protein resides in the golgi apparatus membrane. Its subcellular location is the endoplasmic reticulum membrane. With respect to regulation, autoinhibited. Activated by diacylglycerol and calcium binding, which induces a conformational change releasing the autoinhibitory state. Regulated by DGKA. Regulated by DGKZ. Regulated by PLC gamma and F-actin polymerization. Functionally, functions as a calcium- and diacylglycerol (DAG)-regulated nucleotide exchange factor specifically activating Ras through the exchange of bound GDP for GTP. Activates the Erk/MAP kinase cascade. Regulates T-cell/B-cell development, homeostasis and differentiation by coupling T-lymphocyte/B-lymphocyte antigen receptors to Ras. Regulates NK cell cytotoxicity and ITAM-dependent cytokine production by activation of Ras-mediated ERK and JNK pathways. Functions in mast cell degranulation and cytokine secretion, regulating FcERI-evoked allergic responses. May also function in differentiation of other cell types. The polypeptide is RAS guanyl-releasing protein 1 (RASGRP1) (Homo sapiens (Human)).